The following is a 397-amino-acid chain: Tryptophan synthase beta chain (397 aa).

Position 91 is an N6-(pyridoxal phosphate)lysine (lysine 91).

It belongs to the TrpB family. Tetramer of two alpha and two beta chains. The cofactor is pyridoxal 5'-phosphate.

It catalyses the reaction (1S,2R)-1-C-(indol-3-yl)glycerol 3-phosphate + L-serine = D-glyceraldehyde 3-phosphate + L-tryptophan + H2O. The protein operates within amino-acid biosynthesis; L-tryptophan biosynthesis; L-tryptophan from chorismate: step 5/5. In terms of biological role, the beta subunit is responsible for the synthesis of L-tryptophan from indole and L-serine. The chain is Tryptophan synthase beta chain from Bacillus cereus (strain Q1).